The chain runs to 786 residues: Myosin light chain kinase 3 (786 aa).

A Phosphoserine modification is found at Ser155. Disordered regions lie at residues 233 to 258 (EALD…SEDT), 279 to 315 (RMSQ…IHSD), and 333 to 443 (ELFE…GRRV). Residues 279–293 (RMSQSAGEGTSSSKP) are compositionally biased toward polar residues. Phosphoserine is present on residues Ser341 and Ser422. The Protein kinase domain maps to 482–737 (VSQHEVLGGG…ATQCLKHEWL (256 aa)). Residues 488 to 496 (LGGGRFGQV) and Lys511 each bind ATP. Asp603 acts as the Proton acceptor in catalysis.

The protein belongs to the protein kinase superfamily. CAMK Ser/Thr protein kinase family. Mg(2+) is required as a cofactor. Phosphorylated on serine residues. Expressed in cardiomyocytes (at protein level). Up-regulated in heart after experimental myocardial infarction at the mRNA level.

The protein resides in the cytoplasm. The catalysed reaction is L-seryl-[myosin light chain] + ATP = O-phospho-L-seryl-[myosin light chain] + ADP + H(+). It catalyses the reaction L-threonyl-[myosin light chain] + ATP = O-phospho-L-threonyl-[myosin light chain] + ADP + H(+). Calmodulin-dependent kinase that phosphorylates MYL2 in vitro. Promotes sarcomere formation in cardiomyocytes. Increases cardiomyocyte contractility. This Rattus norvegicus (Rat) protein is Myosin light chain kinase 3 (Mylk3).